A 249-amino-acid polypeptide reads, in one-letter code: Coproheme decarboxylase (249 aa).

Fe-coproporphyrin III contacts are provided by residues arginine 131, 145-149, histidine 172, and glutamine 185; that span reads YPMDK. Residue tyrosine 145 is part of the active site.

Belongs to the ChdC family. Type 1 subfamily. It depends on Fe-coproporphyrin III as a cofactor.

The enzyme catalyses Fe-coproporphyrin III + 2 H2O2 + 2 H(+) = heme b + 2 CO2 + 4 H2O. The catalysed reaction is Fe-coproporphyrin III + H2O2 + H(+) = harderoheme III + CO2 + 2 H2O. It carries out the reaction harderoheme III + H2O2 + H(+) = heme b + CO2 + 2 H2O. The protein operates within porphyrin-containing compound metabolism; protoheme biosynthesis. Involved in coproporphyrin-dependent heme b biosynthesis. Catalyzes the decarboxylation of Fe-coproporphyrin III (coproheme) to heme b (protoheme IX), the last step of the pathway. The reaction occurs in a stepwise manner with a three-propionate intermediate. This is Coproheme decarboxylase from Staphylococcus saprophyticus subsp. saprophyticus (strain ATCC 15305 / DSM 20229 / NCIMB 8711 / NCTC 7292 / S-41).